Reading from the N-terminus, the 61-residue chain is Alpha-conotoxin-like Sm1.1 (61 aa).

The N-terminal stretch at 1–16 is a signal peptide; it reads MFTVFLLVVLATTVVS. Residues 17-43 constitute a propeptide that is removed on maturation; sequence FPSDRASDGRDDEAKDERSDMHESGRK. Residues 19–46 form a disordered region; it reads SDRASDGRDDEAKDERSDMHESGRKGRG. Over residues 21–42 the composition is skewed to basic and acidic residues; it reads RASDGRDDEAKDERSDMHESGR. 2 cysteine pairs are disulfide-bonded: cysteine 48–cysteine 53 and cysteine 49–cysteine 59. The residue at position 55 (proline 55) is a 4-hydroxyproline; partial. Cysteine 59 bears the Cysteine amide mark.

It belongs to the conotoxin A superfamily. In terms of tissue distribution, expressed by the venom duct.

The protein resides in the secreted. Its function is as follows. Alpha-conotoxins act on postsynaptic membranes, they bind to the nicotinic acetylcholine receptors (nAChR) and thus inhibit them. The protein is Alpha-conotoxin-like Sm1.1 of Conus stercusmuscarum (Fly-specked cone).